A 329-amino-acid polypeptide reads, in one-letter code: Mas-related G-protein coupled receptor member X2 (329 aa).

At 1–33 (MDPTTPAWGTESTTMNGNDQALPLLCGKETMIS) the chain is on the extracellular side. Residues 34-54 (VFLILFIALVGLVGNAFVLWL) form a helical membrane-spanning segment. At 55–63 (LGFRMRRNA) the chain is on the cytoplasmic side. The chain crosses the membrane as a helical span at residues 64-84 (FSVYVLSLAGADFLFLCFQMT). The Extracellular segment spans residues 85 to 96 (SCLAYLINFFGS). Residues 97-116 (ISINIPSFFTVMTCAYLAGL) traverse the membrane as a helical segment. At 117–143 (SMLSAISTERCLSVLWPIWYRCRRPRH) the chain is on the cytoplasmic side. A helical membrane pass occupies residues 144 to 164 (LSAVMCVLLWALSLLLSILEG). Topologically, residues 165 to 183 (KFCGFLFSDDDPGWCQTFD) are extracellular. The helical transmembrane segment at 184-204 (FITAAWLMFLFVVLCGSSLAL) threads the bilayer. Residues 205-227 (LVRILCGSRSLPLTRLYLTILLT) are Cytoplasmic-facing. Residues 228-248 (VLIFLLCGLPFGIQWFLILWI) traverse the membrane as a helical segment. At 249–263 (WKNSVVLFCHIHPIS) the chain is on the extracellular side. Residues 264 to 284 (VVLSSFNSSANPIIYFFVGSF) form a helical membrane-spanning segment. The Cytoplasmic segment spans residues 285 to 329 (RKQWRLRQPILKLALQRALQDTAEVDHSEGCFSQGTLEMSRSSLV).

This sequence belongs to the G-protein coupled receptor 1 family. Mas subfamily.

The protein localises to the cell membrane. In terms of biological role, mast cell-specific receptor for basic secretagogues, i.e. cationic amphiphilic drugs, as well as endo- or exogenous peptides, consisting of a basic head group and a hydrophobic core. Recognizes and binds small molecules containing a cyclized tetrahydroisoquinoline (THIQ), such as non-steroidal neuromuscular blocking drugs (NMBDs), including tubocurarine and atracurium. In response to these compounds, mediates pseudo-allergic reactions characterized by histamine release, inflammation and airway contraction. The chain is Mas-related G-protein coupled receptor member X2 (MRGPRX2) from Macaca mulatta (Rhesus macaque).